The sequence spans 277 residues: Putative hydro-lyase BPP3031 (277 aa).

This sequence belongs to the D-glutamate cyclase family.

This chain is Putative hydro-lyase BPP3031, found in Bordetella parapertussis (strain 12822 / ATCC BAA-587 / NCTC 13253).